The primary structure comprises 444 residues: Tubulin beta chain (444 aa).

The GTP site is built by Gln-11, Glu-69, Ser-138, Gly-142, Thr-143, Gly-144, Asn-204, and Asn-226. Glu-69 provides a ligand contact to Mg(2+). The interval 423–444 (QQYQDATAEEEGEFDDEEEMDV) is disordered. Over residues 429–444 (TAEEEGEFDDEEEMDV) the composition is skewed to acidic residues.

This sequence belongs to the tubulin family. In terms of assembly, dimer of alpha and beta chains. A typical microtubule is a hollow water-filled tube with an outer diameter of 25 nm and an inner diameter of 15 nM. Alpha-beta heterodimers associate head-to-tail to form protofilaments running lengthwise along the microtubule wall with the beta-tubulin subunit facing the microtubule plus end conferring a structural polarity. Microtubules usually have 13 protofilaments but different protofilament numbers can be found in some organisms and specialized cells. Requires Mg(2+) as cofactor.

The protein resides in the cytoplasm. Its subcellular location is the cytoskeleton. In terms of biological role, tubulin is the major constituent of microtubules, a cylinder consisting of laterally associated linear protofilaments composed of alpha- and beta-tubulin heterodimers. Microtubules grow by the addition of GTP-tubulin dimers to the microtubule end, where a stabilizing cap forms. Below the cap, tubulin dimers are in GDP-bound state, owing to GTPase activity of alpha-tubulin. The chain is Tubulin beta chain from Euplotes focardii.